Reading from the N-terminus, the 310-residue chain is Homoserine kinase (310 aa).

95–105 serves as a coordination point for ATP; it reads PQSRGLGSSAA.

This sequence belongs to the GHMP kinase family. Homoserine kinase subfamily.

Its subcellular location is the cytoplasm. The enzyme catalyses L-homoserine + ATP = O-phospho-L-homoserine + ADP + H(+). The protein operates within amino-acid biosynthesis; L-threonine biosynthesis; L-threonine from L-aspartate: step 4/5. In terms of biological role, catalyzes the ATP-dependent phosphorylation of L-homoserine to L-homoserine phosphate. In Corynebacterium kroppenstedtii (strain DSM 44385 / JCM 11950 / CIP 105744 / CCUG 35717), this protein is Homoserine kinase.